The sequence spans 498 residues: ATP synthase subunit beta, chloroplastic (498 aa).

An ATP-binding site is contributed by 172 to 179 (GGAGVGKT).

The protein belongs to the ATPase alpha/beta chains family. In terms of assembly, F-type ATPases have 2 components, CF(1) - the catalytic core - and CF(0) - the membrane proton channel. CF(1) has five subunits: alpha(3), beta(3), gamma(1), delta(1), epsilon(1). CF(0) has four main subunits: a(1), b(1), b'(1) and c(9-12).

The protein resides in the plastid. It is found in the chloroplast thylakoid membrane. The enzyme catalyses ATP + H2O + 4 H(+)(in) = ADP + phosphate + 5 H(+)(out). Functionally, produces ATP from ADP in the presence of a proton gradient across the membrane. The catalytic sites are hosted primarily by the beta subunits. This is ATP synthase subunit beta, chloroplastic from Nymphaea odorata (White water lily).